The primary structure comprises 320 residues: Olfactory receptor 5C1 (320 aa).

The Extracellular portion of the chain corresponds to 1 to 29; the sequence is MNSENLTRAAVAPAEFVLLGITNRWDLRV. Residue Asn5 is glycosylated (N-linked (GlcNAc...) asparagine). The helical transmembrane segment at 30-50 threads the bilayer; that stretch reads ALFLTCLPVYLVSLLGNMGMA. Residues 51–58 are Cytoplasmic-facing; the sequence is LLIRMDAR. Residues 59 to 79 traverse the membrane as a helical segment; sequence LHTPMYFFLANLSLLDACYSS. The Extracellular segment spans residues 80 to 103; that stretch reads AIGPKMLVDLLLPRATIPYTACAL. Cys101 and Cys193 form a disulfide bridge. A helical transmembrane segment spans residues 104–124; the sequence is QMFVFAGLADTECCLLAAMAY. Topologically, residues 125-143 are cytoplasmic; the sequence is DRYVAIRNPLLYTTAMSQR. Residues 144–164 form a helical membrane-spanning segment; sequence LCLALLGASGLGGAVSAFVHT. Topologically, residues 165 to 200 are extracellular; sequence TLTFRLSFCRSRKINSFFCDIPPLLAISCSDTSLNE. A helical membrane pass occupies residues 201 to 221; sequence LLLFAICGFIQTATVLAITVS. Residues 222-241 lie on the Cytoplasmic side of the membrane; that stretch reads YGFIAGAVIHMRSVEGSRRA. A helical membrane pass occupies residues 242–262; the sequence is ASTGGSHLTAVAMMYGTLIFM. Residues 263–275 are Extracellular-facing; sequence YLRPSSSYALDTD. A helical membrane pass occupies residues 276-296; sequence KMASVFYTLVIPSLNPLIYSL. The Cytoplasmic segment spans residues 297-320; sequence RNKEVKEALRQTWSRFHCPGQGSQ.

This sequence belongs to the G-protein coupled receptor 1 family.

It is found in the cell membrane. In terms of biological role, odorant receptor. This chain is Olfactory receptor 5C1 (OR5C1), found in Homo sapiens (Human).